We begin with the raw amino-acid sequence, 74 residues long: Protein SMIM7 homolog (74 aa).

The helical transmembrane segment at 53-73 (FRAFIGLWNIFIMFLMLVFFG) threads the bilayer.

This sequence belongs to the SMIM7 family.

It is found in the membrane. The sequence is that of Protein SMIM7 homolog from Ixodes scapularis (Black-legged tick).